We begin with the raw amino-acid sequence, 667 residues long: DNA ligase (667 aa).

NAD(+)-binding positions include 32-36, 81-82, and Glu-110; these read DSEYD and SL. Lys-112 serves as the catalytic N6-AMP-lysine intermediate. NAD(+) is bound by residues Arg-133, Glu-167, Lys-283, and Lys-307. Zn(2+) contacts are provided by Cys-401, Cys-404, Cys-419, and Cys-424. In terms of domain architecture, BRCT spans 586-667; it reads EGHPEFSGKT…FVDKQNELNS (82 aa).

This sequence belongs to the NAD-dependent DNA ligase family. LigA subfamily. Mg(2+) serves as cofactor. Requires Mn(2+) as cofactor.

The catalysed reaction is NAD(+) + (deoxyribonucleotide)n-3'-hydroxyl + 5'-phospho-(deoxyribonucleotide)m = (deoxyribonucleotide)n+m + AMP + beta-nicotinamide D-nucleotide.. In terms of biological role, DNA ligase that catalyzes the formation of phosphodiester linkages between 5'-phosphoryl and 3'-hydroxyl groups in double-stranded DNA using NAD as a coenzyme and as the energy source for the reaction. It is essential for DNA replication and repair of damaged DNA. This Staphylococcus aureus (strain MRSA252) protein is DNA ligase.